The following is a 283-amino-acid chain: Protease HtpX (283 aa).

The next 2 helical transmembrane spans lie at I4–V24 and G33–L53. Position 139 (H139) interacts with Zn(2+). Residue E140 is part of the active site. H143 serves as a coordination point for Zn(2+). 2 helical membrane passes run G147–S167 and I190–A210. Position 218 (E218) interacts with Zn(2+).

The protein belongs to the peptidase M48B family. It depends on Zn(2+) as a cofactor.

Its subcellular location is the cell inner membrane. The protein is Protease HtpX of Haemophilus influenzae (strain PittEE).